Here is a 564-residue protein sequence, read N- to C-terminus: ATP-dependent RNA helicase DBP3 (564 aa).

Residues 31 to 125 (TKQQTMSKDK…TNYTQSSKLS (95 aa)) are disordered. The segment covering 58–73 (ADSKKQRKLEKQEKKD) has biased composition (basic and acidic residues). The span at 74–96 (KKDKKDKKEKKEKKEKKHKKEKK) shows a compositional bias: basic residues. Residues 112–125 (SSSSTNYTQSSKLS) are compositionally biased toward low complexity. Residues 155–181 (LSFDQVQLTSAITSKLSKFDKPTPIQS) carry the Q motif motif. A Helicase ATP-binding domain is found at 184–356 (WPFLLSGKDV…NNFMNSPVKV (173 aa)). ATP is bound at residue 197–204 (AETGSGKT). Positions 303 to 306 (DEAD) match the DEAD box motif. The Helicase C-terminal domain occupies 385 to 534 (KLIQLLRKYN…PVPEELLKFG (150 aa)).

It belongs to the DEAD box helicase family. DDX5/DBP2 subfamily.

The protein resides in the nucleus. The protein localises to the nucleolus. The enzyme catalyses ATP + H2O = ADP + phosphate + H(+). In terms of biological role, ATP-dependent RNA helicase required for 60S ribosomal subunit synthesis. Involved in efficient pre-rRNA processing, predominantly at site A3, which is necessary for the normal formation of 25S and 5.8S rRNAs. In Candida albicans (strain SC5314 / ATCC MYA-2876) (Yeast), this protein is ATP-dependent RNA helicase DBP3 (DBP3).